Reading from the N-terminus, the 135-residue chain is ATP synthase epsilon chain (135 aa).

The protein belongs to the ATPase epsilon chain family. As to quaternary structure, F-type ATPases have 2 components, CF(1) - the catalytic core - and CF(0) - the membrane proton channel. CF(1) has five subunits: alpha(3), beta(3), gamma(1), delta(1), epsilon(1). CF(0) has three main subunits: a, b and c.

The protein localises to the cell inner membrane. Functionally, produces ATP from ADP in the presence of a proton gradient across the membrane. The polypeptide is ATP synthase epsilon chain (Allorhizobium ampelinum (strain ATCC BAA-846 / DSM 112012 / S4) (Agrobacterium vitis (strain S4))).